Reading from the N-terminus, the 358-residue chain is Ubiquitin thioesterase OTU1 (358 aa).

Residues 5–87 (FSVKLKSKKG…LIVEEKAGAA (83 aa)) enclose the Ubiquitin-like domain. A UBX-like region spans residues 8-94 (KLKSKKGQFI…GAAGPTSTPL (87 aa)). The disordered stretch occupies residues 83-108 (KAGAAGPTSTPLASGSGSSTMEDDEA). The segment covering 89-102 (PTSTPLASGSGSST) has biased composition (polar residues). An OTU domain is found at 161–285 (LLKKVVPADN…GIHYDPLYME (125 aa)). The tract at residues 166–172 (VPADNSC) is cys-loop. Asp169 is a catalytic residue. Residue Cys172 is the Nucleophile of the active site. Positions 224–234 (IQKADSWGGAI) are variable-loop. The his-loop stretch occupies residues 274 to 278 (FDGIH). Substrate is bound at residue Ile277. Residue His278 is part of the active site. Positions 301–306 (MGVYQQ) are S2 site. Residues 328–352 (LRCMDCDVMLVGQGQAQEHAKKTGH) form a C2H2-type zinc finger. His352 is an active-site residue.

The catalysed reaction is Thiol-dependent hydrolysis of ester, thioester, amide, peptide and isopeptide bonds formed by the C-terminal Gly of ubiquitin (a 76-residue protein attached to proteins as an intracellular targeting signal).. In terms of biological role, hydrolase that can remove conjugated ubiquitin from proteins and may therefore play an important regulatory role at the level of protein turnover by preventing degradation. The sequence is that of Ubiquitin thioesterase OTU1 from Drosophila pseudoobscura pseudoobscura (Fruit fly).